Consider the following 392-residue polypeptide: 6-aminohexanoate-dimer hydrolase (392 aa).

The disordered stretch occupies residues 1 to 27 (MNTPTTGSHPARYPSAAAGEPTLDSWQ). Ser-112 is a catalytic residue.

The catalysed reaction is [N-(6-aminohexanoyl)](n) + H2O = [N-(6-aminohexanoyl)](n-1) + 6-aminohexanoate. The enzyme catalyses N-(6-aminohexanoyl)-6-aminohexanoate + H2O = 2 6-aminohexanoate. It participates in xenobiotic degradation; nylon-6 oligomer degradation. Its function is as follows. Involved in nylon oligomer degradation. The sequence is that of 6-aminohexanoate-dimer hydrolase from Paenarthrobacter ureafaciens.